Consider the following 320-residue polypeptide: 4-hydroxy-3-methylbut-2-enyl diphosphate reductase 2 (320 aa).

Cys-18 is a binding site for [4Fe-4S] cluster. The (2E)-4-hydroxy-3-methylbut-2-enyl diphosphate site is built by His-47 and His-81. Dimethylallyl diphosphate is bound by residues His-47 and His-81. His-47 and His-81 together coordinate isopentenyl diphosphate. A [4Fe-4S] cluster-binding site is contributed by Cys-103. Residue His-131 coordinates (2E)-4-hydroxy-3-methylbut-2-enyl diphosphate. His-131 provides a ligand contact to dimethylallyl diphosphate. His-131 is a binding site for isopentenyl diphosphate. Catalysis depends on Glu-133, which acts as the Proton donor. Thr-172 serves as a coordination point for (2E)-4-hydroxy-3-methylbut-2-enyl diphosphate. Residue Cys-202 coordinates [4Fe-4S] cluster. (2E)-4-hydroxy-3-methylbut-2-enyl diphosphate is bound by residues Ser-230, Ser-231, Asn-232, and Ser-275. Positions 230, 231, 232, and 275 each coordinate dimethylallyl diphosphate. Positions 230, 231, 232, and 275 each coordinate isopentenyl diphosphate.

It belongs to the IspH family. It depends on [4Fe-4S] cluster as a cofactor.

It carries out the reaction isopentenyl diphosphate + 2 oxidized [2Fe-2S]-[ferredoxin] + H2O = (2E)-4-hydroxy-3-methylbut-2-enyl diphosphate + 2 reduced [2Fe-2S]-[ferredoxin] + 2 H(+). The enzyme catalyses dimethylallyl diphosphate + 2 oxidized [2Fe-2S]-[ferredoxin] + H2O = (2E)-4-hydroxy-3-methylbut-2-enyl diphosphate + 2 reduced [2Fe-2S]-[ferredoxin] + 2 H(+). It functions in the pathway isoprenoid biosynthesis; dimethylallyl diphosphate biosynthesis; dimethylallyl diphosphate from (2E)-4-hydroxy-3-methylbutenyl diphosphate: step 1/1. Its pathway is isoprenoid biosynthesis; isopentenyl diphosphate biosynthesis via DXP pathway; isopentenyl diphosphate from 1-deoxy-D-xylulose 5-phosphate: step 6/6. In terms of biological role, catalyzes the conversion of 1-hydroxy-2-methyl-2-(E)-butenyl 4-diphosphate (HMBPP) into a mixture of isopentenyl diphosphate (IPP) and dimethylallyl diphosphate (DMAPP). Acts in the terminal step of the DOXP/MEP pathway for isoprenoid precursor biosynthesis. This Rhodopseudomonas palustris (strain ATCC BAA-98 / CGA009) protein is 4-hydroxy-3-methylbut-2-enyl diphosphate reductase 2.